A 179-amino-acid polypeptide reads, in one-letter code: Thiol-disulfide oxidoreductase ResA (179 aa).

A helical; Signal-anchor for type II membrane protein membrane pass occupies residues 11–30; sequence TGILLVLICALGYTIYNAVF. The region spanning 36–174 is the Thioredoxin domain; the sequence is ISEGSDAPNF…IHDYMNLIKP (139 aa). Cysteine 74 and cysteine 77 are oxidised to a cystine.

The protein belongs to the thioredoxin family. ResA subfamily.

Its subcellular location is the cell membrane. Its pathway is protein modification; cytochrome c assembly. Functionally, thiol-disulfide oxidoreductase which is required in disulfide reduction during c-type cytochrome synthesis. May accept reducing equivalents from CcdA, leading to breakage of disulfide bonds in apocytochrome c; following this reduction heme can be covalently attached. Does not play a role in sporulation. The sequence is that of Thiol-disulfide oxidoreductase ResA (resA) from Bacillus subtilis (strain 168).